Here is a 272-residue protein sequence, read N- to C-terminus: HMP-PP phosphatase (272 aa).

The active-site Nucleophile is D8. Residues D8, D10, and D212 each coordinate Mg(2+).

Belongs to the HAD-like hydrolase superfamily. Cof family. Mg(2+) is required as a cofactor.

The enzyme catalyses 4-amino-2-methyl-5-(diphosphooxymethyl)pyrimidine + H2O = 4-amino-2-methyl-5-(phosphooxymethyl)pyrimidine + phosphate + H(+). Its function is as follows. Catalyzes the hydrolysis of 4-amino-2-methyl-5-hydroxymethylpyrimidine pyrophosphate (HMP-PP) to 4-amino-2-methyl-5-hydroxymethylpyrimidine phosphate (HMP-P). This chain is HMP-PP phosphatase, found in Salmonella enteritidis PT4 (strain P125109).